The primary structure comprises 107 residues: Phosphoribosyl-ATP pyrophosphatase (107 aa).

It belongs to the PRA-PH family.

It is found in the cytoplasm. The enzyme catalyses 1-(5-phospho-beta-D-ribosyl)-ATP + H2O = 1-(5-phospho-beta-D-ribosyl)-5'-AMP + diphosphate + H(+). The protein operates within amino-acid biosynthesis; L-histidine biosynthesis; L-histidine from 5-phospho-alpha-D-ribose 1-diphosphate: step 2/9. The protein is Phosphoribosyl-ATP pyrophosphatase of Caulobacter sp. (strain K31).